The sequence spans 262 residues: Diphthine synthase (262 aa).

S-adenosyl-L-methionine contacts are provided by residues leucine 10, aspartate 87, valine 90, 115–116 (SI), leucine 166, alanine 209, and histidine 234.

Belongs to the diphthine synthase family. As to quaternary structure, homodimer.

The enzyme catalyses 2-[(3S)-amino-3-carboxypropyl]-L-histidyl-[translation elongation factor 2] + 3 S-adenosyl-L-methionine = diphthine-[translation elongation factor 2] + 3 S-adenosyl-L-homocysteine + 3 H(+). Its pathway is protein modification; peptidyl-diphthamide biosynthesis. Its function is as follows. S-adenosyl-L-methionine-dependent methyltransferase that catalyzes the trimethylation of the amino group of the modified target histidine residue in translation elongation factor 2 (EF-2), to form an intermediate called diphthine. The three successive methylation reactions represent the second step of diphthamide biosynthesis. This is Diphthine synthase from Pyrococcus abyssi (strain GE5 / Orsay).